The chain runs to 336 residues: CENP-A histone chaperone scm3 (336 aa).

The disordered stretch occupies residues 243-269 (RRRNPLLSSPKTPLRRSFSKSKVRNSN). Residues 255-269 (PLRRSFSKSKVRNSN) are compositionally biased toward basic residues.

The protein resides in the cytoplasm. It is found in the nucleus. Its function is as follows. Centromeric protein that plays a central role in the incorporation and maintenance of histone H3-like variant CENPA at centromeres. The sequence is that of CENP-A histone chaperone scm3 from Schizosaccharomyces pombe (strain 972 / ATCC 24843) (Fission yeast).